The primary structure comprises 326 residues: DNA-directed RNA polymerase subunit alpha (326 aa).

Residues 1 to 232 form an alpha N-terminal domain (alpha-NTD) region; that stretch reads MQSATEFLKP…SQLSVFADLE (232 aa). The tract at residues 246 to 326 is alpha C-terminal domain (alpha-CTD); that stretch reads VDPLLLRPVD…NWPPAGLERP (81 aa).

This sequence belongs to the RNA polymerase alpha chain family. In terms of assembly, homodimer. The RNAP catalytic core consists of 2 alpha, 1 beta, 1 beta' and 1 omega subunit. When a sigma factor is associated with the core the holoenzyme is formed, which can initiate transcription.

The catalysed reaction is RNA(n) + a ribonucleoside 5'-triphosphate = RNA(n+1) + diphosphate. In terms of biological role, DNA-dependent RNA polymerase catalyzes the transcription of DNA into RNA using the four ribonucleoside triphosphates as substrates. The polypeptide is DNA-directed RNA polymerase subunit alpha (Thiobacillus denitrificans (strain ATCC 25259 / T1)).